Here is a 109-residue protein sequence, read N- to C-terminus: Large ribosomal subunit protein uL22 (109 aa).

It belongs to the universal ribosomal protein uL22 family. In terms of assembly, part of the 50S ribosomal subunit.

In terms of biological role, this protein binds specifically to 23S rRNA; its binding is stimulated by other ribosomal proteins, e.g. L4, L17, and L20. It is important during the early stages of 50S assembly. It makes multiple contacts with different domains of the 23S rRNA in the assembled 50S subunit and ribosome. Functionally, the globular domain of the protein is located near the polypeptide exit tunnel on the outside of the subunit, while an extended beta-hairpin is found that lines the wall of the exit tunnel in the center of the 70S ribosome. This Azoarcus sp. (strain BH72) protein is Large ribosomal subunit protein uL22.